A 261-amino-acid chain; its full sequence is Calbindin (261 aa).

Alanine 2 is subject to N-acetylalanine. The tract at residues 2 to 7 is interaction with RANBP9; that stretch reads AESHLQ. EF-hand domains are found at residues 11-46, 53-88, 98-133, 142-177, and 186-221; these read ITAS…LLQA, ELSP…EENF, KSCE…LLEK, KLAE…QENF, and MCGK…LCEK. Residues aspartate 24, aspartate 26, serine 28, tyrosine 30, and glutamate 35 each contribute to the Ca(2+) site. Residues aspartate 111, aspartate 113, serine 115, glutamate 122, aspartate 155, asparagine 157, aspartate 159, lysine 161, glutamate 166, aspartate 199, aspartate 201, asparagine 203, tyrosine 205, and glutamate 210 each coordinate Ca(2+).

This sequence belongs to the calbindin family. In terms of assembly, interacts with RANBP9. As to expression, expressed in the modiolar nerve root and in bushy neurons in the ventral cochlear nucleus (at protein level).

Functionally, buffers cytosolic calcium. May stimulate a membrane Ca(2+)-ATPase and a 3',5'-cyclic nucleotide phosphodiesterase. The sequence is that of Calbindin (Calb1) from Mus musculus (Mouse).